The primary structure comprises 341 residues: L-threonine 3-dehydrogenase (341 aa).

C38 serves as a coordination point for Zn(2+). Catalysis depends on charge relay system residues T40 and H43. Zn(2+) contacts are provided by H63, E64, C93, C96, C99, and C107. NAD(+) is bound by residues I175, D195, R200, 262-264 (LGI), and 286-287 (IY).

Belongs to the zinc-containing alcohol dehydrogenase family. As to quaternary structure, homotetramer. It depends on Zn(2+) as a cofactor.

It localises to the cytoplasm. It catalyses the reaction L-threonine + NAD(+) = (2S)-2-amino-3-oxobutanoate + NADH + H(+). It participates in amino-acid degradation; L-threonine degradation via oxydo-reductase pathway; glycine from L-threonine: step 1/2. Its function is as follows. Catalyzes the NAD(+)-dependent oxidation of L-threonine to 2-amino-3-ketobutyrate. This chain is L-threonine 3-dehydrogenase, found in Salmonella typhi.